A 264-amino-acid polypeptide reads, in one-letter code: Zinc import ATP-binding protein ZnuC (264 aa).

The ABC transporter domain occupies 20-235; it reads VQLKNIEVTF…PNFIHFFGDQ (216 aa). 52–59 contacts ATP; the sequence is GPNGGGKS.

It belongs to the ABC transporter superfamily. Zinc importer (TC 3.A.1.15.5) family. The complex is composed of two ATP-binding proteins (ZnuC), two transmembrane proteins (ZnuB) and a solute-binding protein (ZnuA).

It is found in the cell inner membrane. The catalysed reaction is Zn(2+)(out) + ATP(in) + H2O(in) = Zn(2+)(in) + ADP(in) + phosphate(in) + H(+)(in). Part of the ABC transporter complex ZnuABC involved in zinc import. Responsible for energy coupling to the transport system. The polypeptide is Zinc import ATP-binding protein ZnuC (Haemophilus ducreyi (strain 35000HP / ATCC 700724)).